We begin with the raw amino-acid sequence, 56 residues long: Large ribosomal subunit protein bL32 (56 aa).

Basic residues predominate over residues 1 to 19 (MAVPKRKKSRSTTRHRRAQ). The segment at 1–22 (MAVPKRKKSRSTTRHRRAQWKT) is disordered.

This sequence belongs to the bacterial ribosomal protein bL32 family.

This Cutibacterium acnes (strain DSM 16379 / KPA171202) (Propionibacterium acnes) protein is Large ribosomal subunit protein bL32.